Consider the following 677-residue polypeptide: Histidine ammonia-lyase (677 aa).

The segment at residues 269 to 271 is a cross-link (5-imidazolinone (Cys-Gly)); that stretch reads CSG. A 2,3-didehydroalanine (Ser) modification is found at S270.

This sequence belongs to the PAL/histidase family. Contains an active site 4-methylidene-imidazol-5-one (MIO), which is formed autocatalytically by cyclization and dehydration of residues Cys-Ser-Gly.

The enzyme catalyses L-histidine = trans-urocanate + NH4(+). The protein operates within amino-acid degradation; L-histidine degradation into L-glutamate; N-formimidoyl-L-glutamate from L-histidine: step 1/3. In Caenorhabditis elegans, this protein is Histidine ammonia-lyase.